The sequence spans 244 residues: 5-oxoprolinase subunit A (244 aa).

The protein belongs to the LamB/PxpA family. In terms of assembly, forms a complex composed of PxpA, PxpB and PxpC.

The enzyme catalyses 5-oxo-L-proline + ATP + 2 H2O = L-glutamate + ADP + phosphate + H(+). In terms of biological role, catalyzes the cleavage of 5-oxoproline to form L-glutamate coupled to the hydrolysis of ATP to ADP and inorganic phosphate. This Escherichia coli O17:K52:H18 (strain UMN026 / ExPEC) protein is 5-oxoprolinase subunit A.